The following is a 160-amino-acid chain: uncharacterized protein (160 aa).

Residues 27–47 (VMNSYFIAGCGPAVCYYAVSW) traverse the membrane as a helical segment.

It localises to the membrane. This is an uncharacterized protein from Homo sapiens (Human).